A 122-amino-acid chain; its full sequence is Large ribosomal subunit protein uL14c (122 aa).

Belongs to the universal ribosomal protein uL14 family. As to quaternary structure, part of the 50S ribosomal subunit.

It localises to the plastid. The protein resides in the chloroplast. Functionally, binds to 23S rRNA. In Eucalyptus globulus subsp. globulus (Tasmanian blue gum), this protein is Large ribosomal subunit protein uL14c.